The chain runs to 95 residues: 6 kDa early secretory antigenic target (95 aa).

2 helical membrane-spanning segments follow: residues 11 to 43 (IEAAASAIQGNVTSIHSLLDEGKQSLTKLAAAW) and 49 to 85 (EAYQGVQQKWDATATELNNALQNLARTISEAGQAMAS). Positions 56–87 (QKWDATATELNNALQNLARTISEAGQAMASTE) form a coiled coil.

Belongs to the WXG100 family. ESAT-6 subfamily. Forms a tight 1:1 complex with EsxB (CFP-10).

It localises to the secreted. The protein localises to the host membrane. A secreted protein. Acts as a strong host T-cell antigen. Plays a number of roles in modulating the host's immune response to infection as well as being responsible for bacterial escape into the host cytoplasm. The protein is 6 kDa early secretory antigenic target (esxA) of Mycobacterium bovis (strain ATCC BAA-935 / AF2122/97).